A 534-amino-acid chain; its full sequence is Dolichol kinase (534 aa).

The Cytoplasmic portion of the chain corresponds to 1-16 (MTRQCPPQESGAALSG). The helical transmembrane segment at 17–37 (SVLAEAAVVFAVVLSIHAAVW) threads the bilayer. The Extracellular segment spans residues 38–72 (DRYSWCAVALAVQAFYVQYKWDRLLQQGNAVFQFR). The helical transmembrane segment at 73 to 93 (MSANSGLLPASMVMPLLGLVM) threads the bilayer. Over 94-109 (KERCQTAGNPYFERFG) the chain is Cytoplasmic. Residues 110 to 130 (IVVAATGMAVALFSSVLALGI) form a helical membrane-spanning segment. Residues 131-132 (TR) are Extracellular-facing. A helical transmembrane segment spans residues 133–153 (PVPTNTCAISGLAGGVIIYIM). At 154 to 161 (RHSLSVGE) the chain is on the cytoplasmic side. The chain crosses the membrane as a helical span at residues 162 to 182 (VIEVLEVLLIFVYLNMILLYL). Topologically, residues 183 to 186 (LPRC) are extracellular. The chain crosses the membrane as a helical span at residues 187-207 (FTPGEALLVLGGISFVLNQLI). Topologically, residues 208–220 (KRSLTESQGDPVD) are cytoplasmic. The helical transmembrane segment at 221–241 (FFLLVVVVGMVLMGVFFSTLF) threads the bilayer. Topologically, residues 242-252 (VFMDSGTWASS) are extracellular. The helical transmembrane segment at 253–273 (IFFHLMTCVLGLGVVLPWLHW) threads the bilayer. The Cytoplasmic segment spans residues 274–293 (LIRRNPLLWLLQFLFYTETR). A helical membrane pass occupies residues 294 to 314 (IYLLAYWSLLASVACLVVLYQ). Residues 315 to 333 (NAKRSSSESKKHRAPTITR) are Extracellular-facing. The chain crosses the membrane as a helical span at residues 334 to 350 (KYFHFIVVATYIPGIIF). Residues 351-355 (DRPLL) are Cytoplasmic-facing. The helical transmembrane segment at 356–376 (YVAATVCLAVFIFLEYVRYFR) threads the bilayer. Topologically, residues 377 to 397 (IKPLGHTLRSLLSLFLDERDS) are extracellular. A helical membrane pass occupies residues 398 to 418 (GPLILTHIYLLLGMSLPIWLI). The Cytoplasmic segment spans residues 419–432 (PRPCTQKDSLEGAR). A helical transmembrane segment spans residues 433 to 453 (ALVPYAGVLAVGVGDTVASIF). The Extracellular portion of the chain corresponds to 454 to 468 (GSTMGEIRWPGTKKT). The tract at residues 455–470 (STMGEIRWPGTKKTFE) is CTP-binding. Residues 469-489 (FEGTMTSIFAQIISVALILIF) traverse the membrane as a helical segment. Topologically, residues 490–491 (DS) are cytoplasmic. A helical transmembrane segment spans residues 492 to 512 (GVDLNYSYAWILGSISTVSLL). Residues 513-534 (EAYTTQIDNLLLPLYLLILLMA) are Extracellular-facing.

The protein belongs to the polyprenol kinase family.

Its subcellular location is the endoplasmic reticulum membrane. The catalysed reaction is a di-trans,poly-cis-dolichol + CTP = a di-trans,poly-cis-dolichyl phosphate + CDP + H(+). It participates in protein modification; protein glycosylation. Its function is as follows. Catalyzes CTP-mediated phosphorylation of dolichol, the terminal step in de novo dolichyl monophosphate (Dol-P) biosynthesis. Dol-P is a lipid carrier essential for the synthesis of N-linked and O-linked oligosaccharides and for GPI anchors. The polypeptide is Dolichol kinase (Mus musculus (Mouse)).